Here is an 85-residue protein sequence, read N- to C-terminus: MDPKKIARINELAKKKKTEGLTSEEKVEQAKLREEYIEGYRRAVRHHIEGIKIVDEEGNDVTPEKLRQVQREKGLHGRSLDDPNS.

The tract at residues 62 to 85 is disordered; the sequence is TPEKLRQVQREKGLHGRSLDDPNS.

Belongs to the UPF0291 family.

The protein resides in the cytoplasm. The polypeptide is UPF0291 protein SPCG_1462 (Streptococcus pneumoniae (strain CGSP14)).